The chain runs to 191 residues: Ribosome maturation factor RimM (191 aa).

In terms of domain architecture, PRC barrel spans 102 to 185 (EEEYHVSQLI…RIEINPPKGL (84 aa)).

It belongs to the RimM family. In terms of assembly, binds ribosomal protein uS19.

Its subcellular location is the cytoplasm. In terms of biological role, an accessory protein needed during the final step in the assembly of 30S ribosomal subunit, possibly for assembly of the head region. Essential for efficient processing of 16S rRNA. May be needed both before and after RbfA during the maturation of 16S rRNA. It has affinity for free ribosomal 30S subunits but not for 70S ribosomes. This is Ribosome maturation factor RimM from Crocosphaera subtropica (strain ATCC 51142 / BH68) (Cyanothece sp. (strain ATCC 51142)).